Reading from the N-terminus, the 322-residue chain is MRRCEVNSKPISEYFGIPCENREMAKCLLTSSLSVRTKLLQTGVSLYNTSHGFHEEEVKKILEQFPGGSIDLLKKQNGIGILTLNNPNKMNAFSGVMMLQLLERVIELENWTEGKGLIIHGAKNTFCSGSDLNAVKALSTPESGVALSMFMQNTLTRFMRLPLISVALVQGWAMGGGAELTTACDFRLMTEESVIRFVHKEMGIVPSWGGTSRLVEIIGSRQALKVLSGTLKLDSKEALNIGLTDEVLQPSDETTALEQAQEWLEKFVSGPPQVIRGLKKSVCSARELYIEEALQNERDVLETLWGGPANLEAIAKKGKHTK.

At lysine 232 the chain carries N6-acetyllysine; alternate. Position 232 is an N6-succinyllysine; alternate (lysine 232). Residue lysine 316 is modified to N6-succinyllysine.

It belongs to the enoyl-CoA hydratase/isomerase family.

The protein resides in the cytoplasm. It localises to the cytosol. The catalysed reaction is (2S)-ethylmalonyl-CoA + H(+) = butanoyl-CoA + CO2. It carries out the reaction (S)-methylmalonyl-CoA + H(+) = propanoyl-CoA + CO2. The enzyme catalyses (2R)-ethylmalonyl-CoA + H(+) = butanoyl-CoA + CO2. Functionally, decarboxylates ethylmalonyl-CoA, a potentially toxic metabolite, to form butyryl-CoA, suggesting it might be involved in metabolite proofreading. Acts preferentially on (S)-ethylmalonyl-CoA but also has some activity on the (R)-isomer. Also has methylmalonyl-CoA decarboxylase activity at lower level. This Mus musculus (Mouse) protein is Ethylmalonyl-CoA decarboxylase (Echdc1).